Here is a 408-residue protein sequence, read N- to C-terminus: Solute carrier family 35 member F1 (408 aa).

The interval 1-20 (MIPPEPPQPQLQPPPPPAPP) is disordered. Transmembrane regions (helical) follow at residues 60-80 (MLISVALGQVLSLLVCGIGLT), 94-114 (VFQSFLNYILLFLVYTTTLAV), 129-147 (WWKYMILGLIDLEANYLVV), 159-179 (QLLDCFVIPVVILLSWFFLLI), 186-206 (FIGIVVCILGMGCMVGADVLV), 221-241 (LLVLGGATLYGISNVWEESII), 247-267 (VEFLGMIGLFGAFFSGIQLAI), 284-304 (LLYVGFSACMFGLYSFMPVVI), 311-331 (SVNLSLLTADLYSLFCGLFLF), and 335-355 (FSGLYLLSFFTILIGLVLYSS).

Belongs to the SLC35F solute transporter family.

Its subcellular location is the cytoplasmic vesicle. It is found in the secretory vesicle. It localises to the synaptic vesicle membrane. Functionally, putative solute transporter. The chain is Solute carrier family 35 member F1 (Slc35f1) from Mus musculus (Mouse).